Consider the following 392-residue polypeptide: ATP phosphoribosyltransferase regulatory subunit (392 aa).

This sequence belongs to the class-II aminoacyl-tRNA synthetase family. HisZ subfamily. Heteromultimer composed of HisG and HisZ subunits.

It is found in the cytoplasm. The protein operates within amino-acid biosynthesis; L-histidine biosynthesis; L-histidine from 5-phospho-alpha-D-ribose 1-diphosphate: step 1/9. Required for the first step of histidine biosynthesis. May allow the feedback regulation of ATP phosphoribosyltransferase activity by histidine. This Prochlorococcus marinus (strain MIT 9303) protein is ATP phosphoribosyltransferase regulatory subunit.